The sequence spans 174 residues: MKTLVIVIHPNLETSVVNKTWMNRLKQEKDITVHDLYGEYPNFIIDVEKEQQLLLDHERIVFQFPMYWYSSPALLKQWEDDVLTHGWAYGTGGTKLHGKELLLAISLGAQESDYQAGGEYNITISELIRPFQVTANYIGMRFLPAFTQYGTLHLSKEDVKNSAERLVDYLKAEH.

This sequence belongs to the NAD(P)H dehydrogenase (quinone) family.

This is an uncharacterized protein from Bacillus subtilis (strain 168).